Consider the following 215-residue polypeptide: Cytochrome b6 (215 aa).

A helical transmembrane segment spans residues 32 to 52 (IFYCLGGITLTCFLVQVATGF). C35 contributes to the heme c binding site. Positions 86 and 100 each coordinate heme b. 3 helical membrane-spanning segments follow: residues 90-110 (ASMM…TGGF), 116-136 (LTWV…VTGY), and 186-206 (LHTF…FLMI). Residues H187 and H202 each coordinate heme b.

This sequence belongs to the cytochrome b family. PetB subfamily. As to quaternary structure, the 4 large subunits of the cytochrome b6-f complex are cytochrome b6, subunit IV (17 kDa polypeptide, PetD), cytochrome f and the Rieske protein, while the 4 small subunits are PetG, PetL, PetM and PetN. The complex functions as a dimer. Heme b is required as a cofactor. It depends on heme c as a cofactor.

The protein resides in the plastid. The protein localises to the chloroplast thylakoid membrane. In terms of biological role, component of the cytochrome b6-f complex, which mediates electron transfer between photosystem II (PSII) and photosystem I (PSI), cyclic electron flow around PSI, and state transitions. This chain is Cytochrome b6, found in Gossypium barbadense (Sea Island cotton).